A 213-amino-acid chain; its full sequence is Thymidylate kinase (213 aa).

10–17 (GLEGAGKT) contributes to the ATP binding site.

This sequence belongs to the thymidylate kinase family.

It catalyses the reaction dTMP + ATP = dTDP + ADP. Functionally, phosphorylation of dTMP to form dTDP in both de novo and salvage pathways of dTTP synthesis. This chain is Thymidylate kinase, found in Salmonella arizonae (strain ATCC BAA-731 / CDC346-86 / RSK2980).